A 776-amino-acid polypeptide reads, in one-letter code: Protein SEY1 (776 aa).

Over 1 to 681 (MADRSAIQLI…KRSIITTRTH (681 aa)) the chain is Cytoplasmic. Positions 34 to 263 (GLDYHVISVF…TENYYFKPQY (230 aa)) constitute a GB1/RHD3-type G domain. 44 to 51 (GSQSSGKS) serves as a coordination point for GTP. The helical transmembrane segment at 682 to 702 (IPPWIYVLLAVLGWNEFVAVI) threads the bilayer. At 703 to 705 (RNP) the chain is on the lumenal side. Residues 706 to 726 (LFVTLTLILGATFFVIHKFGL) traverse the membrane as a helical segment. Residues 727–776 (WGPVVNVVQSAVGETRTAIKDKLRQFVVEDHEVKESFEMKDFSKNEQKEK) are Cytoplasmic-facing.

Belongs to the TRAFAC class dynamin-like GTPase superfamily. GB1/RHD3 GTPase family. RHD3 subfamily. Interacts with RTN1 and YOP1; GTP binding is not required for these interactions.

It is found in the endoplasmic reticulum membrane. Cooperates with the reticulon proteins RTN1 and RTN2 and the tubule-shaping DP1 family protein YOP1 to generate and maintain the structure of the tubular endoplasmic reticulum network. Has GTPase activity, which is required for its function in ER organization. The protein is Protein SEY1 of Saccharomyces cerevisiae (strain RM11-1a) (Baker's yeast).